The following is a 453-amino-acid chain: Lipase 9 (453 aa).

The signal sequence occupies residues 1–14; that stretch reads MLYLILFLIAPIYA. N-linked (GlcNAc...) asparagine glycosylation occurs at N36. A disulfide bridge connects residues C110 and C281. The active-site Charge relay system is S194. N229, N266, and N269 each carry an N-linked (GlcNAc...) asparagine glycan. Catalysis depends on charge relay system residues D343 and H376. The cysteines at positions 359 and 404 are disulfide-linked. The N-linked (GlcNAc...) asparagine glycan is linked to N417.

The protein belongs to the AB hydrolase superfamily. Lipase family. Class Lip subfamily.

Its subcellular location is the secreted. It catalyses the reaction a triacylglycerol + H2O = a diacylglycerol + a fatty acid + H(+). Its function is as follows. Secreted lipase that is able to hydrolyze both the neutral triacylglycerols and the monopalmitate ester Tween 40, allowing the use of hydrolyzed products as carbon sources. Has broad lipolytic activity, which may be important for colonization and subsequent infection, therefore contributing to the persistence and virulence in human tissue. The sequence is that of Lipase 9 from Candida albicans (strain SC5314 / ATCC MYA-2876) (Yeast).